The primary structure comprises 537 residues: Eukaryotic translation initiation factor 3 subunit L (537 aa).

Residues 1–19 (MSRRVEFDLSTEDHSDRRR) are compositionally biased toward basic and acidic residues. The tract at residues 1-30 (MSRRVEFDLSTEDHSDRRRTNTFSSSADED) is disordered. The PCI domain occupies 299-487 (EATKMFVNCL…GPSSADDDEP (189 aa)).

Belongs to the eIF-3 subunit L family. Component of the eukaryotic translation initiation factor 3 (eIF-3) complex.

Its subcellular location is the cytoplasm. Its function is as follows. Component of the eukaryotic translation initiation factor 3 (eIF-3) complex, which is involved in protein synthesis of a specialized repertoire of mRNAs and, together with other initiation factors, stimulates binding of mRNA and methionyl-tRNAi to the 40S ribosome. The eIF-3 complex specifically targets and initiates translation of a subset of mRNAs involved in cell proliferation. This chain is Eukaryotic translation initiation factor 3 subunit L, found in Caenorhabditis elegans.